A 337-amino-acid polypeptide reads, in one-letter code: Movement protein (337 aa).

A compositionally biased stretch (polar residues) spans Met1–Leu11. Disordered stretches follow at residues Met1–Thr24 and Ser273–Thr337.

Its subcellular location is the host cell junction. It localises to the host plasmodesma. Functionally, transports viral genome to neighboring plant cells directly through plasmosdesmata, without any budding. The movement protein allows efficient cell to cell propagation, by bypassing the host cell wall barrier. Acts by forming a tubular structure at the host plasmodesmata, enlarging it enough to allow free passage of virion capsids. This chain is Movement protein, found in Olive latent virus 2 (isolate Italy) (OLV-2).